A 284-amino-acid polypeptide reads, in one-letter code: NAD kinase (284 aa).

The Proton acceptor role is filled by D60. NAD(+) contacts are provided by residues 60–61, 134–135, K145, R162, D164, and Q235; these read DG and ND.

The protein belongs to the NAD kinase family. A divalent metal cation is required as a cofactor.

It is found in the cytoplasm. It catalyses the reaction NAD(+) + ATP = ADP + NADP(+) + H(+). In terms of biological role, involved in the regulation of the intracellular balance of NAD and NADP, and is a key enzyme in the biosynthesis of NADP. Catalyzes specifically the phosphorylation on 2'-hydroxyl of the adenosine moiety of NAD to yield NADP. The polypeptide is NAD kinase (Treponema denticola (strain ATCC 35405 / DSM 14222 / CIP 103919 / JCM 8153 / KCTC 15104)).